Reading from the N-terminus, the 327-residue chain is Ribose-phosphate pyrophosphokinase (327 aa).

Residues 46 to 48 (NGE) and 105 to 106 (RQ) each bind ATP. Residues His-139 and Asp-179 each contribute to the Mg(2+) site. Residue Lys-203 is part of the active site. D-ribose 5-phosphate is bound by residues Arg-205, Asp-231, and 235 to 239 (DTGGT).

Belongs to the ribose-phosphate pyrophosphokinase family. Class I subfamily. As to quaternary structure, homohexamer. Mg(2+) serves as cofactor.

Its subcellular location is the cytoplasm. It catalyses the reaction D-ribose 5-phosphate + ATP = 5-phospho-alpha-D-ribose 1-diphosphate + AMP + H(+). The protein operates within metabolic intermediate biosynthesis; 5-phospho-alpha-D-ribose 1-diphosphate biosynthesis; 5-phospho-alpha-D-ribose 1-diphosphate from D-ribose 5-phosphate (route I): step 1/1. Its function is as follows. Involved in the biosynthesis of the central metabolite phospho-alpha-D-ribosyl-1-pyrophosphate (PRPP) via the transfer of pyrophosphoryl group from ATP to 1-hydroxyl of ribose-5-phosphate (Rib-5-P). The chain is Ribose-phosphate pyrophosphokinase from Mycobacterium leprae (strain TN).